A 78-amino-acid chain; its full sequence is Cytochrome c-551 (78 aa).

Heme c contacts are provided by Cys14, Cys17, His18, and Met55.

In terms of processing, binds 1 heme c group covalently per subunit.

The chain is Cytochrome c-551 from Halorhodospira halophila (Ectothiorhodospira halophila).